Consider the following 162-residue polypeptide: Probable chemoreceptor glutamine deamidase CheD 3 (162 aa).

This sequence belongs to the CheD family.

The catalysed reaction is L-glutaminyl-[protein] + H2O = L-glutamyl-[protein] + NH4(+). Functionally, probably deamidates glutamine residues to glutamate on methyl-accepting chemotaxis receptors (MCPs), playing an important role in chemotaxis. The sequence is that of Probable chemoreceptor glutamine deamidase CheD 3 from Geobacter sulfurreducens (strain ATCC 51573 / DSM 12127 / PCA).